Reading from the N-terminus, the 477-residue chain is Methionine aminopeptidase 2 (477 aa).

Residues 1 to 121 (MAGVEEAASC…TDPPSVPICD (121 aa)) are disordered. Position 2 is an N-acetylalanine (A2). A compositionally biased stretch (basic residues) spans 36–46 (KKKKRKKKKSK). The residue at position 45 (S45) is a Phosphoserine. The segment covering 54–78 (EPDKEAGASVDEVTRQLERQALEEK) has biased composition (basic and acidic residues). At S62 the chain carries Phosphoserine; alternate. O-linked (GlcNAc) serine; alternate glycosylation occurs at S62. The span at 79-91 (EKDDDDEDGDGDG) shows a compositional bias: acidic residues. Residues 96–108 (GKKKKKKKKKRGP) are compositionally biased toward basic residues. H230 is a binding site for substrate. A divalent metal cation is bound by residues D250, D261, and H330. H338 contributes to the substrate binding site. E363 and E458 together coordinate a divalent metal cation.

It belongs to the peptidase M24A family. Methionine aminopeptidase eukaryotic type 2 subfamily. As to quaternary structure, binds EIF2S1 at low magnesium concentrations. Interacts strongly with the eIF-2 gamma-subunit EIF2S3. It depends on Co(2+) as a cofactor. Zn(2+) is required as a cofactor. The cofactor is Mn(2+). Fe(2+) serves as cofactor. In terms of processing, contains approximately 12 O-linked N-acetylglucosamine (GlcNAc) residues. O-glycosylation is required for EIF2S1 binding.

Its subcellular location is the cytoplasm. It catalyses the reaction Release of N-terminal amino acids, preferentially methionine, from peptides and arylamides.. Functionally, cotranslationally removes the N-terminal methionine from nascent proteins. The N-terminal methionine is often cleaved when the second residue in the primary sequence is small and uncharged (Met-Ala-, Cys, Gly, Pro, Ser, Thr, or Val). Protects eukaryotic initiation factor EIF2S1 from translation-inhibiting phosphorylation by inhibitory kinases such as EIF2AK2/PKR and EIF2AK1/HCR. Plays a critical role in the regulation of protein synthesis. The chain is Methionine aminopeptidase 2 from Bos taurus (Bovine).